The chain runs to 1325 residues: Nephrocystin-3 (1325 aa).

Residues 1–20 (MGTASSLVSPTGGEVIEDTY) are disordered. Gly2 carries the N-myristoyl glycine lipid modification. A coiled-coil region spans residues 107-203 (SMGRREAKLD…QRLQAQGIQV (97 aa)). 11 TPR repeats span residues 467–500 (TPEE…AHEL), 881–914 (CLLN…KGAM), 916–937 (TEYF…MLCL), 938–971 (ADLY…RETA), 980–1013 (AQSL…SENA), 1022–1055 (AREL…RQQA), 1088–1121 (ARTL…RERV), 1130–1163 (AQSL…RRRA), 1172–1205 (AYTV…RQKS), 1214–1247 (ATAL…YEDS), and 1256–1289 (GETL…KEAE). Residues 1293-1325 (LGGKAPSRQSSSGDTFLFKTTHSPNVFLPQGQS) are disordered. Polar residues predominate over residues 1299 to 1325 (SRQSSSGDTFLFKTTHSPNVFLPQGQS).

As to quaternary structure, interacts with NPHP1 and INVS/NPHP2. Interacts (when myristoylated) with UNC119 and UNC119B; interaction is required for localization to cilium. Interacts with CEP164. Component of a complex containing at least ANKS6, INVS, NEK8 and NPHP3. ANKS6 may organize complex assembly by linking INVS and NPHP3 to NEK8 and INVS may target the complex to the proximal ciliary axoneme.

The protein resides in the cell projection. It localises to the cilium. In terms of biological role, required for normal ciliary development and function. Inhibits disheveled-1-induced canonical Wnt-signaling activity and may also play a role in the control of non-canonical Wnt signaling that regulates planar cell polarity. Probably acts as a molecular switch between different Wnt signaling pathways. Required for proper convergent extension cell movements. This Mus musculus (Mouse) protein is Nephrocystin-3 (Nphp3).